The following is a 388-amino-acid chain: Na(+)/H(+) antiporter NhaA (388 aa).

The next 11 membrane-spanning stretches (helical) occupy residues 14 to 34, 59 to 79, 95 to 115, 125 to 145, 154 to 174, 179 to 199, 219 to 239, 254 to 274, 292 to 312, 328 to 348, and 356 to 376; these read GGIILIIAAALAMLMANMGAT, MLLWINDALMAVFFLLIGLEV, VFPVIAAIGGMIVPALLYLAF, GWAIPAATDIAFALGVLALLG, IFLMALAIIDDLGAIIIIALF, LSIVSLGVAAFAIVVLALLNL, VLKSGVHATLAGVIVGFFIPL, ILHPWVAYLILPLFAFANAGV, IIAGLLIGKPLGISLFCWLAL, IMAVGILCGIGFTMSIFIASL, and ALINWAKLGILIGSLLSAVVG.

This sequence belongs to the NhaA Na(+)/H(+) (TC 2.A.33) antiporter family.

It is found in the cell inner membrane. The catalysed reaction is Na(+)(in) + 2 H(+)(out) = Na(+)(out) + 2 H(+)(in). Its function is as follows. Na(+)/H(+) antiporter that extrudes sodium in exchange for external protons. The sequence is that of Na(+)/H(+) antiporter NhaA from Salmonella arizonae (strain ATCC BAA-731 / CDC346-86 / RSK2980).